Reading from the N-terminus, the 243-residue chain is Carboxy-S-adenosyl-L-methionine synthase (243 aa).

S-adenosyl-L-methionine is bound by residues Tyr40, 65 to 67 (GCS), 90 to 91 (DN), 118 to 119 (DI), Asn133, and Arg200.

Belongs to the class I-like SAM-binding methyltransferase superfamily. Cx-SAM synthase family. As to quaternary structure, homodimer.

It carries out the reaction prephenate + S-adenosyl-L-methionine = carboxy-S-adenosyl-L-methionine + 3-phenylpyruvate + H2O. Catalyzes the conversion of S-adenosyl-L-methionine (SAM) to carboxy-S-adenosyl-L-methionine (Cx-SAM). The protein is Carboxy-S-adenosyl-L-methionine synthase of Shewanella pealeana (strain ATCC 700345 / ANG-SQ1).